Consider the following 501-residue polypeptide: Aldehyde dehydrogenase 1A1 (501 aa).

Ser2 bears the N-acetylserine mark. Lys91 and Lys128 each carry N6-acetyllysine. Residues 167-170 (IPWN), 193-196 (KPAE), 226-227 (GP), and 246-247 (GS) contribute to the NAD(+) site. Residue Lys252 is modified to N6-acetyllysine. Glu269 (proton acceptor) is an active-site residue. 269-271 (ELG) serves as a coordination point for NAD(+). The active-site Nucleophile is the Cys303. A mediates interaction with PRMT3 region spans residues 336–501 (LTPGINQGPQ…VAMKISQKNS (166 aa)). Thr337 carries the phosphothreonine modification. Residue 349-353 (EQHDK) coordinates NAD(+). An N6-acetyllysine mark is found at Lys353 and Lys367. 400 to 402 (EIF) contacts NAD(+). Lys410 is modified (N6-acetyllysine). A Phosphoserine modification is found at Ser413. 3 positions are modified to N6-acetyllysine: Lys419, Lys435, and Lys495.

It belongs to the aldehyde dehydrogenase family. As to quaternary structure, homotetramer. Interacts with PRMT3; the interaction is direct, inhibits ALDH1A1 aldehyde dehydrogenase activity and is independent of the methyltransferase activity of PRMT3. The N-terminus is blocked most probably by acetylation. In terms of tissue distribution, expressed in retina. Expressed in lens and cornea (at protein level). Expressed by midbrain dopamine neurons.

It localises to the cytoplasm. The protein localises to the cytosol. It is found in the cell projection. Its subcellular location is the axon. The catalysed reaction is an aldehyde + NAD(+) + H2O = a carboxylate + NADH + 2 H(+). It carries out the reaction all-trans-retinal + NAD(+) + H2O = all-trans-retinoate + NADH + 2 H(+). The enzyme catalyses 9-cis-retinal + NAD(+) + H2O = 9-cis-retinoate + NADH + 2 H(+). It catalyses the reaction 11-cis-retinal + NAD(+) + H2O = 11-cis-retinoate + NADH + 2 H(+). The catalysed reaction is 13-cis-retinal + NAD(+) + H2O = 13-cis-retinoate + NADH + 2 H(+). It carries out the reaction 4-aminobutanal + NAD(+) + H2O = 4-aminobutanoate + NADH + 2 H(+). The enzyme catalyses 3-deoxyglucosone + NAD(+) + H2O = 2-dehydro-3-deoxy-D-gluconate + NADH + 2 H(+). It catalyses the reaction (E)-4-hydroxynon-2-enal + NAD(+) + H2O = (E)-4-hydroxynon-2-enoate + NADH + 2 H(+). The catalysed reaction is malonaldehyde + NAD(+) + H2O = 3-oxopropanoate + NADH + 2 H(+). It carries out the reaction hexanal + NAD(+) + H2O = hexanoate + NADH + 2 H(+). The enzyme catalyses propanal + NAD(+) + H2O = propanoate + NADH + 2 H(+). It catalyses the reaction acetaldehyde + NAD(+) + H2O = acetate + NADH + 2 H(+). The catalysed reaction is benzaldehyde + NAD(+) + H2O = benzoate + NADH + 2 H(+). Its pathway is cofactor metabolism; retinol metabolism. With respect to regulation, the aminobutyraldehyde dehydrogenase activity is negatively regulated by ethanol in vivo. Cytosolic dehydrogenase that catalyzes the irreversible oxidation of a wide range of aldehydes to their corresponding carboxylic acid. Functions downstream of retinol dehydrogenases and catalyzes the oxidation of retinaldehyde into retinoic acid, the second step in the oxidation of retinol/vitamin A into retinoic acid. This pathway is crucial to control the levels of retinol and retinoic acid, two important molecules which excess can be teratogenic and cytotoxic. Also oxidizes aldehydes resulting from lipid peroxidation like (E)-4-hydroxynon-2-enal/HNE, malonaldehyde and hexanal that form protein adducts and are highly cytotoxic. By participating for instance to the clearance of (E)-4-hydroxynon-2-enal/HNE in the lens epithelium prevents the formation of HNE-protein adducts and lens opacification. Also functions downstream of fructosamine-3-kinase in the fructosamine degradation pathway by catalyzing the oxidation of 3-deoxyglucosone, the carbohydrate product of fructosamine 3-phosphate decomposition, which is itself a potent glycating agent that may react with lysine and arginine side-chains of proteins. Also has an aminobutyraldehyde dehydrogenase activity and is probably part of an alternative pathway for the biosynthesis of GABA/4-aminobutanoate in midbrain, thereby playing a role in GABAergic synaptic transmission. The chain is Aldehyde dehydrogenase 1A1 from Mus musculus (Mouse).